Reading from the N-terminus, the 323-residue chain is L-lactate dehydrogenase 1 (323 aa).

Residues valine 18, aspartate 39, tyrosine 69, and 83 to 84 (GA) contribute to the NAD(+) site. Substrate contacts are provided by glutamine 86 and arginine 92. Residues serine 105, 122-124 (VAN), and serine 147 each bind NAD(+). 124 to 127 (NPVD) provides a ligand contact to substrate. A substrate-binding site is contributed by 152-155 (DTGR). The active-site Proton acceptor is the histidine 179. Phosphotyrosine is present on tyrosine 223. A substrate-binding site is contributed by threonine 232.

The protein belongs to the LDH/MDH superfamily. LDH family. Homotetramer.

Its subcellular location is the cytoplasm. The enzyme catalyses (S)-lactate + NAD(+) = pyruvate + NADH + H(+). Its pathway is fermentation; pyruvate fermentation to lactate; (S)-lactate from pyruvate: step 1/1. In terms of biological role, catalyzes the conversion of lactate to pyruvate. This Lactobacillus acidophilus (strain ATCC 700396 / NCK56 / N2 / NCFM) protein is L-lactate dehydrogenase 1.